Consider the following 116-residue polypeptide: Large ribosomal subunit protein uL18 (116 aa).

The protein belongs to the universal ribosomal protein uL18 family. In terms of assembly, part of the 50S ribosomal subunit; part of the 5S rRNA/L5/L18/L25 subcomplex. Contacts the 5S and 23S rRNAs.

In terms of biological role, this is one of the proteins that bind and probably mediate the attachment of the 5S RNA into the large ribosomal subunit, where it forms part of the central protuberance. In Shewanella baltica (strain OS223), this protein is Large ribosomal subunit protein uL18.